The sequence spans 537 residues: Exoglucanase 1 (537 aa).

A signal peptide spans 1 to 18 (MKGSISYQIYKGALLLSA). The interval 19-453 (LLNSVSAQQV…YVIYSNIKTG (435 aa)) is catalytic. Asn-136 carries an N-linked (GlcNAc...) asparagine glycan. Glu-235 functions as the Nucleophile in the catalytic mechanism. The active-site Proton donor is Glu-240. N-linked (GlcNAc...) asparagine glycosylation is found at Asn-414 and Asn-456. The tract at residues 454–477 (PLNSTFTGGTTSSSSTTTTTSKST) is linker. Residues 458–502 (TFTGGTTSSSSTTTTTSKSTSTSSSSKTTTTVTTTTTSSGSSGTG) are compositionally biased toward low complexity. A disordered region spans residues 458-503 (TFTGGTTSSSSTTTTTSKSTSTSSSSKTTTTVTTTTTSSGSSGTGA). A CBM1 domain is found at 501–537 (TGARDWAQCGGNGWTGPTTCVSPYTCTKQNDWYSQCL). Intrachain disulfides connect Cys-509–Cys-526 and Cys-520–Cys-536.

The protein belongs to the glycosyl hydrolase 7 (cellulase C) family.

The protein localises to the secreted. The enzyme catalyses Hydrolysis of (1-&gt;4)-beta-D-glucosidic linkages in cellulose and cellotetraose, releasing cellobiose from the non-reducing ends of the chains.. This Penicillium janthinellum (Penicillium vitale) protein is Exoglucanase 1 (cbh1).